The chain runs to 319 residues: Acetyl esterase (319 aa).

Residues 91 to 93 (HGG) carry the Involved in the stabilization of the negatively charged intermediate by the formation of the oxyanion hole motif. Residues Ser165, Asp262, and His292 contribute to the active site.

The protein belongs to the 'GDXG' lipolytic enzyme family. In terms of assembly, homodimer. Interacts with MalT and MelA.

It localises to the cytoplasm. In terms of biological role, displays esterase activity towards short chain fatty esters (acyl chain length of up to 8 carbons). Able to hydrolyze triacetylglycerol (triacetin) and tributyrylglycerol (tributyrin), but not trioleylglycerol (triolein) or cholesterol oleate. Negatively regulates MalT activity by antagonizing maltotriose binding. Inhibits MelA galactosidase activity. This is Acetyl esterase from Shigella flexneri serotype 5b (strain 8401).